The following is a 157-amino-acid chain: UPF0251 protein CLD_3165 (157 aa).

Belongs to the UPF0251 family.

The polypeptide is UPF0251 protein CLD_3165 (Clostridium botulinum (strain Okra / Type B1)).